Here is a 103-residue protein sequence, read N- to C-terminus: Large ribosomal subunit protein bL21 (103 aa).

Belongs to the bacterial ribosomal protein bL21 family. Part of the 50S ribosomal subunit. Contacts protein L20.

Its function is as follows. This protein binds to 23S rRNA in the presence of protein L20. This chain is Large ribosomal subunit protein bL21, found in Variovorax paradoxus (strain S110).